The primary structure comprises 359 residues: MSTENTLSVADLARENVRNLVPYQSARRLGGNGDVWLNANEFPTAVEFQLTQQTLNRYPECQPKAVIENYAQYAGVKPEQVLVSRGADEGIELVIRAFCEPGKDAILYCPPTYGMYSVSAETIGVERRTVPALENWQLDLQGISDNLDGTKVVFVCSPNNPTGQLINPQDLRTLLELTRGKAIVVADEAYIEFCPQATLTGWLVEYPHLVILRTLSKAFALAGLRCGFTLANEEVINLLLKVIAPYPLSTPVADIAAQALCPQGINAMRDRVAQTVQERQYLVNALKQTACVEHVFDSETNYILARFTASSSVFKSLWDQGIILRDQNKQPSLSGCLRITVGTRQENQRVIDALRAEPV.

Lys217 is modified (N6-(pyridoxal phosphate)lysine).

The protein belongs to the class-II pyridoxal-phosphate-dependent aminotransferase family. Histidinol-phosphate aminotransferase subfamily. In terms of assembly, homodimer. The cofactor is pyridoxal 5'-phosphate.

It carries out the reaction L-histidinol phosphate + 2-oxoglutarate = 3-(imidazol-4-yl)-2-oxopropyl phosphate + L-glutamate. It functions in the pathway amino-acid biosynthesis; L-histidine biosynthesis; L-histidine from 5-phospho-alpha-D-ribose 1-diphosphate: step 7/9. This chain is Histidinol-phosphate aminotransferase, found in Salmonella heidelberg (strain SL476).